A 76-amino-acid chain; its full sequence is Dermaseptin-H1 (76 aa).

An N-terminal signal peptide occupies residues 1 to 22 (MDILKKSLFIVLFLGLVSLSIC). The propeptide occupies 23–45 (EEEKRENEDEEEQEDDEQSEEKR). Residues 25–44 (EKRENEDEEEQEDDEQSEEK) form a disordered region. Positions 30-41 (EDEEEQEDDEQS) are enriched in acidic residues. A Glutamine amide modification is found at Gln-73. Positions 75-76 (EQ) are excised as a propeptide.

Expressed by the skin glands.

The protein localises to the secreted. Functionally, has antimicrobial activity. The sequence is that of Dermaseptin-H1 from Pithecopus hypochondrialis (Orange-legged leaf frog).